The primary structure comprises 92 residues: Small ribosomal subunit protein uS19 (92 aa).

This sequence belongs to the universal ribosomal protein uS19 family.

Its function is as follows. Protein S19 forms a complex with S13 that binds strongly to the 16S ribosomal RNA. The protein is Small ribosomal subunit protein uS19 of Variovorax paradoxus (strain S110).